Consider the following 405-residue polypeptide: Scramblase ANY1 (405 aa).

The Cytoplasmic segment spans residues 1–51 (MSTTGPLDATLIRDVAVATATKASYDMSDTLYSYLPKVDQFYIPEWLTMQF). A helical membrane pass occupies residues 52–72 (IANNLISFTPLFSYGTTIISI). Residues 73-76 (EKCK) are Lumenal-facing. A helical membrane pass occupies residues 77-97 (TALGFSIDICATMLIASILRI). Residues 98–103 (SYYLIT) lie on the Cytoplasmic side of the membrane. A helical transmembrane segment spans residues 104 to 124 (PYEITLLRQSLVMIFIQLILL). At 125–177 (RTSLKYRPDEYKYQNLTDVESLSHLIHDIWFEFFSCINRPKFLSEDWKNLIKS) the chain is on the lumenal side. A helical transmembrane segment spans residues 178-198 (LSFTNLLKFSFKIFLAFFYKI). Residues 199–223 (LKFFDPNFKRIGAFWQWDDDKNFWR) lie on the Cytoplasmic side of the membrane. Residues 224-244 (FLALFATVQILVTFFISNILN) form a helical membrane-spanning segment. Over 245 to 254 (WDSLAQGLGS) the chain is Lumenal. Residues 252-309 (LGSIIGSLGLLVESLLPLPQIAILYKLKSVQGFKLILLVSWLCGDTLKITYLIFGAKN) form the PQ-loop domain. The helical transmembrane segment at 255–275 (IIGSLGLLVESLLPLPQIAIL) threads the bilayer. Residues 276 to 283 (YKLKSVQG) are Cytoplasmic-facing. Residues 284–306 (FKLILLVSWLCGDTLKITYLIFG) traverse the membrane as a helical segment. The Lumenal segment spans residues 307–312 (AKNISA). A helical membrane pass occupies residues 313 to 335 (LFVIFALFQMSLDFYIGGQYIYY). Residues 336 to 405 (RYYYPKLRHQ…GKSQAQAVTL (70 aa)) are Cytoplasmic-facing. The tract at residues 379–405 (LKQDSNDTSDSPQDDQVGKSQAQAVTL) is disordered. Residues 396–405 (GKSQAQAVTL) are compositionally biased toward polar residues.

As to quaternary structure, interacts with NEO1.

It localises to the golgi apparatus membrane. It is found in the late endosome membrane. Its function is as follows. Phospholipid scramblase that transports phosphatidylserine (PS) and phosphatidylethalonamine (PE) bidirectionally from one leaflet to the other of the phospholipid bilayer to at least partially collapse the membrane asymmetry established by NEO1 and other flippases. The PS scramblase activity has been disputed. Functions in the trafficking pathway from endosomes to the trans-Golgi network (TGN). This chain is Scramblase ANY1, found in Saccharomyces cerevisiae (strain ATCC 204508 / S288c) (Baker's yeast).